Here is a 104-residue protein sequence, read N- to C-terminus: Phosphoribosyl-ATP pyrophosphatase (104 aa).

It belongs to the PRA-PH family.

The protein resides in the cytoplasm. The catalysed reaction is 1-(5-phospho-beta-D-ribosyl)-ATP + H2O = 1-(5-phospho-beta-D-ribosyl)-5'-AMP + diphosphate + H(+). It participates in amino-acid biosynthesis; L-histidine biosynthesis; L-histidine from 5-phospho-alpha-D-ribose 1-diphosphate: step 2/9. This Methanocorpusculum labreanum (strain ATCC 43576 / DSM 4855 / Z) protein is Phosphoribosyl-ATP pyrophosphatase.